A 274-amino-acid chain; its full sequence is 4-diphosphocytidyl-2-C-methyl-D-erythritol kinase (274 aa).

The active site involves K8. 94 to 104 contacts ATP; that stretch reads PSGAGLGGGSA. D136 is an active-site residue.

The protein belongs to the GHMP kinase family. IspE subfamily.

The catalysed reaction is 4-CDP-2-C-methyl-D-erythritol + ATP = 4-CDP-2-C-methyl-D-erythritol 2-phosphate + ADP + H(+). Its pathway is isoprenoid biosynthesis; isopentenyl diphosphate biosynthesis via DXP pathway; isopentenyl diphosphate from 1-deoxy-D-xylulose 5-phosphate: step 3/6. Catalyzes the phosphorylation of the position 2 hydroxy group of 4-diphosphocytidyl-2C-methyl-D-erythritol. This chain is 4-diphosphocytidyl-2-C-methyl-D-erythritol kinase, found in Bacteroides fragilis (strain YCH46).